A 134-amino-acid polypeptide reads, in one-letter code: uncharacterized protein (134 aa).

This is an uncharacterized protein from Bacillus subtilis (strain 168).